The sequence spans 340 residues: Protein LSM14 homolog car-1 (340 aa).

In terms of domain architecture, Sm spans 1 to 81; the sequence is MSNQTPYIGS…IKDLIVCDTP (81 aa). Over residues 101–125 the composition is skewed to low complexity; the sequence is SRSAPASDGAPAASAGSSRAGTPSR. Residues 101–148 form a disordered region; the sequence is SRSAPASDGAPAASAGSSRAGTPSRNSPLGQIIQNQRPGRGGYQQNFQ. Residues 126-148 show a composition bias toward polar residues; it reads NSPLGQIIQNQRPGRGGYQQNFQ. The DFDF domain maps to 178–214; it reads VNHREKLKFESDFDFEKANEKFQEVLVDNLEKLNIED. The FFD box signature appears at 227-243; sequence AFYDKKTSFFDNISCES. Positions 251 to 271 match the TFG box motif; that stretch reads TGRPDWKKERETNQETFGHNA. The interval 277 to 340 is disordered; sequence YRRGFGGRGR…QGNTAAAAEQ (64 aa). Residues 280-296 show a composition bias toward gly residues; it reads GFGGRGRGGNRGYGGYN. Low complexity predominate over residues 312-325; that stretch reads GYRQNNGGYRRGGY.

Belongs to the LSM14 family.

The protein localises to the nucleus. Functionally, transcriptional regulator. Involved in modulating embryonic expression of ATP-dependent chaperone cdc-48.1. May play a role in mRNA gene silencing, and RNA granule (P-body) assembly. The protein is Protein LSM14 homolog car-1 of Caenorhabditis elegans.